The chain runs to 283 residues: MLIIETLPLLRQQIRRLRMEGKRVALVPTMGNLHDGHMKLVDEAKARADVVVVSIFVNPMQFDRPEDLARYPRTLQEDCEKLNKRKVDLVFAPSVKEIYPNGTETHTYVDVPGLSTMLEGASRPGHFRGVSTIVSKLFNLVQPDIACFGEKDFQQLALIRKMVADMGFDIEIVGVPIMRAKDGLALSSRNGYLTAEQRKIAPGLYKVLSSIADKLQAGERDLDEIIAIAGQELNEKGFRADDIQIRDADTLLEVSETSKRAVILVAAWLGDARLIDNKIVELA.

Residue Met30 to His37 coordinates ATP. His37 (proton donor) is an active-site residue. Gln61 provides a ligand contact to (R)-pantoate. A beta-alanine-binding site is contributed by Gln61. Gly149–Asp152 lines the ATP pocket. Gln155 contacts (R)-pantoate. Residue Leu186–Arg189 participates in ATP binding.

It belongs to the pantothenate synthetase family. Homodimer.

Its subcellular location is the cytoplasm. It catalyses the reaction (R)-pantoate + beta-alanine + ATP = (R)-pantothenate + AMP + diphosphate + H(+). Its pathway is cofactor biosynthesis; (R)-pantothenate biosynthesis; (R)-pantothenate from (R)-pantoate and beta-alanine: step 1/1. Catalyzes the condensation of pantoate with beta-alanine in an ATP-dependent reaction via a pantoyl-adenylate intermediate. The chain is Pantothenate synthetase from Shigella sonnei (strain Ss046).